A 42-amino-acid polypeptide reads, in one-letter code: Photosystem II reaction center protein J (42 aa).

Residues 10–30 (IPLWLVGTVAGTAAIGLLGIF) form a helical membrane-spanning segment.

The protein belongs to the PsbJ family. PSII is composed of 1 copy each of membrane proteins PsbA, PsbB, PsbC, PsbD, PsbE, PsbF, PsbH, PsbI, PsbJ, PsbK, PsbL, PsbM, PsbT, PsbX, PsbY, PsbZ, Psb30/Ycf12, at least 3 peripheral proteins of the oxygen-evolving complex and a large number of cofactors. It forms dimeric complexes.

The protein localises to the plastid. The protein resides in the chloroplast thylakoid membrane. One of the components of the core complex of photosystem II (PSII). PSII is a light-driven water:plastoquinone oxidoreductase that uses light energy to abstract electrons from H(2)O, generating O(2) and a proton gradient subsequently used for ATP formation. It consists of a core antenna complex that captures photons, and an electron transfer chain that converts photonic excitation into a charge separation. This chain is Photosystem II reaction center protein J, found in Pleurastrum terricola (Filamentous green alga).